Here is a 515-residue protein sequence, read N- to C-terminus: Bifunctional purine biosynthesis protein PurH (515 aa).

The region spanning 1–145 is the MGS-like domain; that stretch reads MTKRALISVS…KNHASVTVVV (145 aa).

The protein belongs to the PurH family.

The enzyme catalyses (6R)-10-formyltetrahydrofolate + 5-amino-1-(5-phospho-beta-D-ribosyl)imidazole-4-carboxamide = 5-formamido-1-(5-phospho-D-ribosyl)imidazole-4-carboxamide + (6S)-5,6,7,8-tetrahydrofolate. It catalyses the reaction IMP + H2O = 5-formamido-1-(5-phospho-D-ribosyl)imidazole-4-carboxamide. It participates in purine metabolism; IMP biosynthesis via de novo pathway; 5-formamido-1-(5-phospho-D-ribosyl)imidazole-4-carboxamide from 5-amino-1-(5-phospho-D-ribosyl)imidazole-4-carboxamide (10-formyl THF route): step 1/1. The protein operates within purine metabolism; IMP biosynthesis via de novo pathway; IMP from 5-formamido-1-(5-phospho-D-ribosyl)imidazole-4-carboxamide: step 1/1. This chain is Bifunctional purine biosynthesis protein PurH, found in Streptococcus pyogenes serotype M6 (strain ATCC BAA-946 / MGAS10394).